A 471-amino-acid chain; its full sequence is Glutamate--tRNA ligase (471 aa).

The short motif at 9–19 (PSPTGYLHVGG) is the 'HIGH' region element. Residues C98, C100, C125, and H127 each coordinate Zn(2+). Residues 237–241 (KLSKR) carry the 'KMSKS' region motif. K240 contributes to the ATP binding site.

The protein belongs to the class-I aminoacyl-tRNA synthetase family. Glutamate--tRNA ligase type 1 subfamily. In terms of assembly, monomer. Zn(2+) serves as cofactor.

It localises to the cytoplasm. It catalyses the reaction tRNA(Glu) + L-glutamate + ATP = L-glutamyl-tRNA(Glu) + AMP + diphosphate. Functionally, catalyzes the attachment of glutamate to tRNA(Glu) in a two-step reaction: glutamate is first activated by ATP to form Glu-AMP and then transferred to the acceptor end of tRNA(Glu). This Shigella dysenteriae serotype 1 (strain Sd197) protein is Glutamate--tRNA ligase.